Consider the following 84-residue polypeptide: Small ribosomal subunit protein uS17 (84 aa).

Belongs to the universal ribosomal protein uS17 family. As to quaternary structure, part of the 30S ribosomal subunit.

One of the primary rRNA binding proteins, it binds specifically to the 5'-end of 16S ribosomal RNA. This is Small ribosomal subunit protein uS17 from Borrelia hermsii (strain HS1 / DAH).